The chain runs to 264 residues: E3 ubiquitin-protein ligase MARCHF8 (264 aa).

The interval 15–47 is disordered; the sequence is LGHSVSRSSNISKAGSPTSVSAPSRFPRTSVTP. A compositionally biased stretch (polar residues) spans 16–47; that stretch reads GHSVSRSSNISKAGSPTSVSAPSRFPRTSVTP. The RING-CH-type zinc finger occupies 45–106; the sequence is VTPSSQDICR…ELCKFEFIME (62 aa). Positions 53, 56, 70, 72, 80, 83, 96, and 99 each coordinate Zn(2+). The next 2 helical transmembrane spans lie at 130-150 and 170-190; these read CSVT…YVLI and FWTK…FMYV.

The protein resides in the cytoplasmic vesicle membrane. The protein localises to the lysosome membrane. Its subcellular location is the early endosome membrane. It carries out the reaction S-ubiquitinyl-[E2 ubiquitin-conjugating enzyme]-L-cysteine + [acceptor protein]-L-lysine = [E2 ubiquitin-conjugating enzyme]-L-cysteine + N(6)-ubiquitinyl-[acceptor protein]-L-lysine.. The protein operates within protein modification; protein ubiquitination. E3 ubiquitin-protein ligase that mediates ubiquitination of cd86 and MHC class II proteins, such as hla-dr alpha and beta, and promotes their subsequent endocytosis and sorting to lysosomes via multivesicular bodies. In Xenopus laevis (African clawed frog), this protein is E3 ubiquitin-protein ligase MARCHF8 (marchf8).